Consider the following 374-residue polypeptide: WAT1-related protein At1g60050 (374 aa).

10 consecutive transmembrane segments (helical) span residues 11 to 31 (IVPF…TILA), 42 to 62 (FVFI…YSFY), 82 to 102 (IFLL…LGLS), 107 to 127 (IVVC…SLAL), 145 to 165 (IGTL…GPFI), 194 to 214 (WALG…WNII), 228 to 248 (VVSA…AFME), 255 to 275 (ELKL…GSII), 292 to 312 (VPLF…SFFV), and 315 to 335 (LHYG…LIMW). In terms of domain architecture, EamA spans 26-155 (ALTILAKTAL…GTLICFTGAF (130 aa)).

The protein belongs to the drug/metabolite transporter (DMT) superfamily. Plant drug/metabolite exporter (P-DME) (TC 2.A.7.4) family.

The protein resides in the membrane. In Arabidopsis thaliana (Mouse-ear cress), this protein is WAT1-related protein At1g60050.